The primary structure comprises 294 residues: Zinc finger protein 346 (294 aa).

M1 carries the N-acetylmethionine modification. Over residues 1–19 (MECPAPDATDAADPGEAGP) the composition is skewed to low complexity. The disordered stretch occupies residues 1–35 (MECPAPDATDAADPGEAGPYKGSEEPEGREPDGVR). Residues 22 to 35 (GSEEPEGREPDGVR) are compositionally biased toward basic and acidic residues. A Matrin-type 1 zinc finger spans residues 70–104 (FTSTQCKVCCAMLISESQKLAHYQSKKHANKVKRY). Zn(2+) is bound by residues C75, C78, H91, and H97. K114 participates in a covalent cross-link: Glycyl lysine isopeptide (Lys-Gly) (interchain with G-Cter in SUMO2). The segment at 131–165 (DKNHCCPICNMTFSSPAVAQSHYLGKTHAKSLKLK) adopts a Matrin-type 2 zinc-finger fold. Residues C136, C139, H152, and H158 each contribute to the Zn(2+) site. A Glycyl lysine isopeptide (Lys-Gly) (interchain with G-Cter in SUMO2) cross-link involves residue K170. 2 consecutive Matrin-type zinc fingers follow at residues 182-216 (DPDK…ETKL) and 236-270 (GKGY…SPKT). The tract at residues 269–294 (KTLVTLGSQTPVQTQPTPKDSSTVQD) is disordered.

In terms of assembly, forms a heteromeric complex with XPO5 and ILF3. Found in a nuclear export complex with XPO5, RAN, ILF3, ZNF346 and double-stranded RNA. Interacts with XPO5. Interacts with ILF3 in an RNA-independent manner. In terms of tissue distribution, expressed in all tissues tested, including heart, brain, spleen, lung, liver, muscle, kidney and testis. Exogenous expression induced apoptosis.

The protein localises to the nucleus. It is found in the nucleolus. The protein resides in the cytoplasm. In terms of biological role, binds with low affinity to dsDNA and ssRNA, and with high affinity to dsRNA, with no detectable sequence specificity. May bind to specific miRNA hairpins. The polypeptide is Zinc finger protein 346 (Znf346) (Mus musculus (Mouse)).